Here is a 181-residue protein sequence, read N- to C-terminus: Bifunctional protein PyrR (181 aa).

Substrate is bound by residues Arg-39–Arg-40, Asp-104–Thr-112, Arg-137, and Val-161. The PRPP-binding signature appears at Val-100–Thr-112.

It belongs to the purine/pyrimidine phosphoribosyltransferase family. PyrR subfamily.

The catalysed reaction is UMP + diphosphate = 5-phospho-alpha-D-ribose 1-diphosphate + uracil. In terms of biological role, regulates the transcription of the pyrimidine nucleotide (pyr) operon in response to exogenous pyrimidines. Its function is as follows. Also displays a weak uracil phosphoribosyltransferase activity which is not physiologically significant. This Pasteurella multocida (strain Pm70) protein is Bifunctional protein PyrR.